Reading from the N-terminus, the 104-residue chain is Growth-regulated protein homolog alpha (104 aa).

The N-terminal stretch at 1–30 (MAPAATAAAPRLLRAAMLFLLLVAAGRRAA) is a signal peptide. Intrachain disulfides connect C40-C66 and C42-C82.

The protein belongs to the intercrine alpha (chemokine CxC) family.

The protein resides in the secreted. The sequence is that of Growth-regulated protein homolog alpha from Bos taurus (Bovine).